Here is a 362-residue protein sequence, read N- to C-terminus: Formate dehydrogenase (362 aa).

Residues V93 and N119 each contribute to the substrate site. NAD(+) contacts are provided by residues 174-175 (RI), D195, 230-234 (PLHAG), T256, D282, 311-314 (HYSG), and S357.

Belongs to the D-isomer specific 2-hydroxyacid dehydrogenase family. FDH subfamily. As to quaternary structure, homodimer.

It localises to the cytoplasm. The catalysed reaction is formate + NAD(+) = CO2 + NADH. Functionally, catalyzes the NAD(+)-dependent oxidation of formate to carbon dioxide. Formate oxidation is the final step in the methanol oxidation pathway in methylotrophic microorganisms. Has a role in the detoxification of exogenous formate in non-methylotrophic organisms. The chain is Formate dehydrogenase from Pichia angusta (Yeast).